Reading from the N-terminus, the 205-residue chain is 3-demethoxyubiquinol 3-hydroxylase (205 aa).

Fe cation contacts are provided by Glu54, Glu84, His87, Glu136, Glu168, and His171.

It belongs to the COQ7 family. Requires Fe cation as cofactor.

It localises to the cell membrane. The enzyme catalyses a 5-methoxy-2-methyl-3-(all-trans-polyprenyl)benzene-1,4-diol + AH2 + O2 = a 3-demethylubiquinol + A + H2O. It participates in cofactor biosynthesis; ubiquinone biosynthesis. Its function is as follows. Catalyzes the hydroxylation of 2-nonaprenyl-3-methyl-6-methoxy-1,4-benzoquinol during ubiquinone biosynthesis. In Delftia acidovorans (strain DSM 14801 / SPH-1), this protein is 3-demethoxyubiquinol 3-hydroxylase.